The primary structure comprises 155 residues: 3-hydroxyacyl-[acyl-carrier-protein] dehydratase FabZ (155 aa).

His61 is an active-site residue.

The protein belongs to the thioester dehydratase family. FabZ subfamily.

It is found in the cytoplasm. The catalysed reaction is a (3R)-hydroxyacyl-[ACP] = a (2E)-enoyl-[ACP] + H2O. In terms of biological role, involved in unsaturated fatty acids biosynthesis. Catalyzes the dehydration of short chain beta-hydroxyacyl-ACPs and long chain saturated and unsaturated beta-hydroxyacyl-ACPs. The sequence is that of 3-hydroxyacyl-[acyl-carrier-protein] dehydratase FabZ from Synechococcus elongatus (strain ATCC 33912 / PCC 7942 / FACHB-805) (Anacystis nidulans R2).